The chain runs to 88 residues: ATP synthase F(0) complex subunit f, mitochondrial (88 aa).

Ala-2 carries the N-acetylalanine modification. Ser-3 carries the phosphoserine modification. Lys-16 is subject to N6-acetyllysine. A helical transmembrane segment spans residues 62–79; the sequence is MVLAAYVVFNYCRSYKEL.

Belongs to the ATPase F chain family. Component of the ATP synthase complex composed at least of ATP5F1A/subunit alpha, ATP5F1B/subunit beta, ATP5MC1/subunit c (homooctomer), MT-ATP6/subunit a, MT-ATP8/subunit 8, ATP5ME/subunit e, ATP5MF/subunit f, ATP5MG/subunit g, ATP5MK/subunit k, ATP5MJ/subunit j, ATP5F1C/subunit gamma, ATP5F1D/subunit delta, ATP5F1E/subunit epsilon, ATP5PF/subunit F6, ATP5PB/subunit b, ATP5PD/subunit d, ATP5PO/subunit OSCP. ATP synthase complex consists of a soluble F(1) head domain (subunits alpha(3) and beta(3)) - the catalytic core - and a membrane F(0) domain - the membrane proton channel (subunits c, a, 8, e, f, g, k and j). These two domains are linked by a central stalk (subunits gamma, delta, and epsilon) rotating inside the F1 region and a stationary peripheral stalk (subunits F6, b, d, and OSCP).

The protein localises to the mitochondrion. The protein resides in the mitochondrion inner membrane. In terms of biological role, subunit f, of the mitochondrial membrane ATP synthase complex (F(1)F(0) ATP synthase or Complex V) that produces ATP from ADP in the presence of a proton gradient across the membrane which is generated by electron transport complexes of the respiratory chain. ATP synthase complex consist of a soluble F(1) head domain - the catalytic core - and a membrane F(1) domain - the membrane proton channel. These two domains are linked by a central stalk rotating inside the F(1) region and a stationary peripheral stalk. During catalysis, ATP synthesis in the catalytic domain of F(1) is coupled via a rotary mechanism of the central stalk subunits to proton translocation. In vivo, can only synthesize ATP although its ATP hydrolase activity can be activated artificially in vitro. Part of the complex F(0) domain. The sequence is that of ATP synthase F(0) complex subunit f, mitochondrial from Sus scrofa (Pig).